The following is a 95-amino-acid chain: Co-chaperonin GroES (95 aa).

The protein belongs to the GroES chaperonin family. In terms of assembly, heptamer of 7 subunits arranged in a ring. Interacts with the chaperonin GroEL.

The protein resides in the cytoplasm. In terms of biological role, together with the chaperonin GroEL, plays an essential role in assisting protein folding. The GroEL-GroES system forms a nano-cage that allows encapsulation of the non-native substrate proteins and provides a physical environment optimized to promote and accelerate protein folding. GroES binds to the apical surface of the GroEL ring, thereby capping the opening of the GroEL channel. The protein is Co-chaperonin GroES of Francisella philomiragia subsp. philomiragia (strain ATCC 25017 / CCUG 19701 / FSC 153 / O#319-036).